Reading from the N-terminus, the 1915-residue chain is Cysteine repeat modular protein 2 (1915 aa).

The N-terminal stretch at 1-23 is a signal peptide; sequence MKFKKELINILALIFVLKKNIFA. 5 FU repeats span residues 53 to 98, 104 to 151, 161 to 208, 210 to 263, and 267 to 315; these read LGLC…QTYV, SCIC…GYTQ, QLLC…LQYK, NGIC…GYVV, and TQRC…GNYQ. Asn-138 is a glycosylation site (N-linked (GlcNAc...) asparagine). 3 N-linked (GlcNAc...) asparagine glycosylation sites follow: Asn-274, Asn-279, and Asn-316. FU repeat units follow at residues 317 to 362, 373 to 422, 427 to 492, 496 to 546, and 554 to 602; these read SSLC…GFYT, QPIC…QTYY, TRSC…GFYQ, NNSC…SQNN, and TQAC…GTYM. An N-linked (GlcNAc...) asparagine glycan is attached at Asn-409. N-linked (GlcNAc...) asparagine glycans are attached at residues Asn-496, Asn-572, Asn-603, and Asn-621. 3 FU repeats span residues 606–639, 640–686, and 690–739; these read TNQC…LQQN, YNVC…GFYV, and QQAC…NECL. Residue Asn-742 is glycosylated (N-linked (GlcNAc...) asparagine). FU repeat units follow at residues 760-814 and 818-865; these read DGQC…GFYY and NKQC…GYYQ. 5 N-linked (GlcNAc...) asparagine glycosylation sites follow: Asn-909, Asn-930, Asn-1051, Asn-1085, and Asn-1193. One can recognise an EGF-like domain in the interval 1184-1224; the sequence is VQIPCDSNINCSGNGKCLWSQDNYNEILCICNINYAGRYCE. Disulfide bonds link Cys-1188–Cys-1200, Cys-1194–Cys-1212, and Cys-1214–Cys-1223. Asn-1250, Asn-1297, Asn-1519, Asn-1546, Asn-1554, Asn-1580, and Asn-1596 each carry an N-linked (GlcNAc...) asparagine glycan. Helical transmembrane passes span 1599–1619, 1662–1682, 1704–1724, 1763–1783, and 1796–1816; these read LLYA…ISII, YAQL…VYSL, STSV…VNLF, GLVF…ILSF, and FASF…FCFI. N-linked (GlcNAc...) asparagine glycosylation occurs at Asn-1867.

It is found in the membrane. Its function is as follows. Required for mucocyst secretion. The protein is Cysteine repeat modular protein 2 of Tetrahymena thermophila (strain SB210).